The chain runs to 286 residues: Versiconal hemiacetal acetate esterase stcI (286 aa).

Positions 54–56 (HAG) match the Involved in the stabilization of the negatively charged intermediate by the formation of the oxyanion hole motif. Active-site residues include Ser123, Asp226, and His256.

This sequence belongs to the 'GDXG' lipolytic enzyme family.

The enzyme catalyses (2S,3S)-versiconal hemiacetal acetate + H2O = (2S-3S)-versiconal hemiacetal + acetate + H(+). It catalyses the reaction (3S)-versiconol acetate + H2O = (S)-versiconol + acetate + H(+). It participates in mycotoxin biosynthesis; sterigmatocystin biosynthesis. Esterase; part of the gene cluster that mediates the biosynthesis of sterigmatocystin (ST), a polyketide-derived furanocoumarin which is part of the most toxic and carcinogenic compounds among the known mycotoxins. The first step in the biosynthesis of sterigmatocystin is the production of hexanoate by the fatty acid synthase (FAS) units stcJ and stcK. The polyketide backbone is assembled by the non-reducing polyketide synthase stcA by condensation of the starter hexanoyl-CoA and 7 malonyl-CoA extender units followed by cyclization and release of norsolorinic acid. Norsolorinic acid is the first stable intermediate in the biosynthesis of sterigmatocystin and is converted into averantin (AVN) by the ketoreductase stcE which reduces the hexanoate ketone to an alcohol. Averantin is then oxidized into 5'-hydroxyaverantin (HAVN) by the cytochrome P450 monooxygenase stcF. 5'-hydroxyaverantin is further converted to 5'-oxyaverantin (OAVN) by the 5'-hydroxyaverantin dehydrogenase stcG. The next step is the conversion of OAVN into averufin (AVF) which is catalyzed by a yet to be identified enzyme. The cytochrome P450 monooxygenase stcB and the flavin-binding monooxygenase stcW are both required for the conversion of averufin to 1-hydroxyversicolorone. The esterase stcI probably catalyzes the formation of versiconal hemiacetal acetate from 1-hydroxyversicolorone. The oxydoreductase stcN then probably catalyzes the biosynthetic step from versiconal to versicolorin B (VERB). The next step is performed by the versicolorin B desaturase stcL to produce versicolorin A (VERA). The ketoreductase stcU and the cytochrome P450 monooxygenase stcS are involved in the conversion of versicolorin A to demethylsterigmatocystin. The Baeyer-Villiger oxidas stcQ and the reductase stcR might be involved in the biosynthetic step from versicolorin A to demethylsterigmatocystin. The final step in the biosynthesis of sterigmatocystin is the methylation of demethylsterigmatocystin catalyzed by the methyltransferase stcP. The chain is Versiconal hemiacetal acetate esterase stcI from Emericella nidulans (strain FGSC A4 / ATCC 38163 / CBS 112.46 / NRRL 194 / M139) (Aspergillus nidulans).